The primary structure comprises 86 residues: Large ribosomal subunit protein bL31B (86 aa).

It belongs to the bacterial ribosomal protein bL31 family. Type B subfamily. In terms of assembly, part of the 50S ribosomal subunit.

This Cupriavidus necator (strain ATCC 17699 / DSM 428 / KCTC 22496 / NCIMB 10442 / H16 / Stanier 337) (Ralstonia eutropha) protein is Large ribosomal subunit protein bL31B.